The primary structure comprises 387 residues: MAQKTTISVIKADIGSLAGHHTVHPDCMAAASRVLAEAKKNGVINDFYVTHVGDDLILIMTHTKGVDHPDVHGLAWEAFKKAAEVAKELGLYAAGQDLLSDAFSGNVRGLGPAAAEMEIEERPSEPIVIFAADKTEPGAFNLPLYKIFADPFNTAGLVIDPRLHDGFVFEVVDVFEDKGVHLNTPEELYDLLALIGTPSRYVIRRVFRKDGKIAAVVSVERLNLIAGKYVGKDDPVMIVRAQSGFPAVGEVLEPFTFPHLVAGWMRGSHNGPLMPVPVRDARPTRFDGPPRVIALGFQVKNAKLVGPSDLFDDPAFDEARRTANKVADYIRRHGPFMPHRLDPSEMEYTTLPQVLERLKDRFKPVKDLPVPKVKHSEMLSGAEEAHD.

Aspartate 13 functions as the Proton acceptor; for FBP phosphatase activity in the catalytic mechanism. Positions 13, 20, 54, and 55 each coordinate Mg(2+). Residue histidine 20 coordinates beta-D-fructose 1,6-bisphosphate. Histidine 20 contributes to the dihydroxyacetone phosphate binding site. Tyrosine 92 contacts beta-D-fructose 1,6-bisphosphate. Residue glutamine 96 participates in Mg(2+) binding. 105 to 106 (GN) is a beta-D-fructose 1,6-bisphosphate binding site. Residue aspartate 133 coordinates Mg(2+). Lysine 134 serves as a coordination point for beta-D-fructose 1,6-bisphosphate. Lysine 134 is a binding site for dihydroxyacetone phosphate. Tyrosine 229 acts as the Proton donor/acceptor; for FBP aldolase activity in catalysis. Residues lysine 232, aspartate 233, and aspartate 234 each contribute to the Mg(2+) site. Lysine 232 (schiff-base intermediate with DHAP; for FBP aldolase activity) is an active-site residue. Residues 242–243 (QS), arginine 266, aspartate 287, and tyrosine 348 contribute to the beta-D-fructose 1,6-bisphosphate site. The dihydroxyacetone phosphate site is built by arginine 266 and aspartate 287.

This sequence belongs to the FBP aldolase/phosphatase family. In terms of assembly, homooctamer; dimer of tetramers. Requires Mg(2+) as cofactor.

The catalysed reaction is beta-D-fructose 1,6-bisphosphate + H2O = beta-D-fructose 6-phosphate + phosphate. It catalyses the reaction beta-D-fructose 1,6-bisphosphate = D-glyceraldehyde 3-phosphate + dihydroxyacetone phosphate. The protein operates within carbohydrate biosynthesis; gluconeogenesis. Functionally, catalyzes two subsequent steps in gluconeogenesis: the aldol condensation of dihydroxyacetone phosphate (DHAP) and glyceraldehyde-3-phosphate (GA3P) to fructose-1,6-bisphosphate (FBP), and the dephosphorylation of FBP to fructose-6-phosphate (F6P). The sequence is that of Fructose-1,6-bisphosphate aldolase/phosphatase from Ignicoccus hospitalis (strain KIN4/I / DSM 18386 / JCM 14125).